Consider the following 1528-residue polypeptide: Intraflagellar transport protein 121 (1528 aa).

4 WD repeats span residues 123 to 170 (SNRA…GSAP), 244 to 285 (SSMP…SSVS), 619 to 667 (PSLT…SEFL), and 759 to 798 (PELIGIWGLVFSPEDPNLVAVSSQYKVIVFHLDTQTREDS). The disordered stretch occupies residues 914–933 (DSGLDVTASNSSQPSTQTSQ). The span at 920 to 933 (TASNSSQPSTQTSQ) shows a compositional bias: low complexity.

Its subcellular location is the cell projection. It is found in the cilium. The protein resides in the flagellum. It localises to the cytoplasm. The protein localises to the cytoskeleton. Its subcellular location is the flagellum axoneme. It is found in the flagellum basal body. Component of the intraflagellar transport complex A (IFT-A) involved in flagellar assembly. This chain is Intraflagellar transport protein 121, found in Giardia intestinalis (strain ATCC 50803 / WB clone C6) (Giardia lamblia).